The sequence spans 373 residues: Secondary metabolism regulator laeA (373 aa).

Disordered stretches follow at residues 1 to 21 (MFLN…PLNV) and 53 to 81 (AAER…NPDR). Residues 67–77 (GSPSINSTSSK) show a composition bias toward polar residues.

This sequence belongs to the methyltransferase superfamily. LaeA methyltransferase family. Component of the heterotrimeric velvet complex composed of laeA, veA and velB; VeA acting as a bridging protein between laeA and velB.

Its subcellular location is the nucleus. The enzyme catalyses L-methionyl-[protein] + S-adenosyl-L-methionine = S-methyl-L-methionyl-[protein] + S-adenosyl-L-homocysteine. In terms of biological role, methyltransferase that performs automethylation. No other methyl-accepting substrate has been identified yet. Component of the velvet transcription factor complex that acts as a global regulator for secondary metabolite gene expression. Controls the expression of the cyclopiazonic acid (CPA) gene clusters. Regulates also pigmentation and conidial head morphology. The protein is Secondary metabolism regulator laeA of Aspergillus fumisynnematus.